A 546-amino-acid polypeptide reads, in one-letter code: CTP synthase (546 aa).

Residues 1–266 (MTTRYIFVTG…DELVVKRFSL (266 aa)) form an amidoligase domain region. S14 serves as a coordination point for CTP. Position 14 (S14) interacts with UTP. Residues 15 to 20 (SLGKGI) and D72 each bind ATP. Positions 72 and 140 each coordinate Mg(2+). CTP contacts are provided by residues 147-149 (DIE), 187-192 (KTKPTQ), and K223. UTP contacts are provided by residues 187 to 192 (KTKPTQ) and K223. Residue 239–241 (KDV) participates in ATP binding. The region spanning 291-542 (VIGMVGKYIE…VAAASAHQKR (252 aa)) is the Glutamine amidotransferase type-1 domain. G352 contributes to the L-glutamine binding site. Residue C379 is the Nucleophile; for glutamine hydrolysis of the active site. Residues 380 to 383 (LGMQ), E403, and R470 contribute to the L-glutamine site. Residues H515 and E517 contribute to the active site.

The protein belongs to the CTP synthase family. In terms of assembly, homotetramer.

The catalysed reaction is UTP + L-glutamine + ATP + H2O = CTP + L-glutamate + ADP + phosphate + 2 H(+). It carries out the reaction L-glutamine + H2O = L-glutamate + NH4(+). It catalyses the reaction UTP + NH4(+) + ATP = CTP + ADP + phosphate + 2 H(+). It functions in the pathway pyrimidine metabolism; CTP biosynthesis via de novo pathway; CTP from UDP: step 2/2. With respect to regulation, allosterically activated by GTP, when glutamine is the substrate; GTP has no effect on the reaction when ammonia is the substrate. The allosteric effector GTP functions by stabilizing the protein conformation that binds the tetrahedral intermediate(s) formed during glutamine hydrolysis. Inhibited by the product CTP, via allosteric rather than competitive inhibition. Catalyzes the ATP-dependent amination of UTP to CTP with either L-glutamine or ammonia as the source of nitrogen. Regulates intracellular CTP levels through interactions with the four ribonucleotide triphosphates. This chain is CTP synthase, found in Shewanella oneidensis (strain ATCC 700550 / JCM 31522 / CIP 106686 / LMG 19005 / NCIMB 14063 / MR-1).